Here is a 310-residue protein sequence, read N- to C-terminus: 4-hydroxythreonine-4-phosphate dehydrogenase (310 aa).

T129 is a binding site for substrate. A divalent metal cation contacts are provided by H158, H202, and H250. Substrate-binding residues include K258, N267, and R276.

It belongs to the PdxA family. As to quaternary structure, homodimer. A divalent metal cation is required as a cofactor.

It localises to the cytoplasm. The catalysed reaction is 4-(phosphooxy)-L-threonine + NAD(+) = 3-amino-2-oxopropyl phosphate + CO2 + NADH. Its pathway is cofactor biosynthesis; pyridoxine 5'-phosphate biosynthesis; pyridoxine 5'-phosphate from D-erythrose 4-phosphate: step 4/5. Catalyzes the NAD(P)-dependent oxidation of 4-(phosphooxy)-L-threonine (HTP) into 2-amino-3-oxo-4-(phosphooxy)butyric acid which spontaneously decarboxylates to form 3-amino-2-oxopropyl phosphate (AHAP). The polypeptide is 4-hydroxythreonine-4-phosphate dehydrogenase (Hydrogenobaculum sp. (strain Y04AAS1)).